Here is a 538-residue protein sequence, read N- to C-terminus: Frizzled-4 (538 aa).

The first 37 residues, 1–37 (MAWQGTGPSVRGMPGGVRLRLGLLLLQLLLLQRPALG), serve as a signal peptide directing secretion. Residues 38 to 213 (FGDEEERRCD…KCGYDAGLYS (176 aa)) are Extracellular-facing. Residues 41-162 (EEERRCDPIR…NDHNHMCMEG (122 aa)) form the FZ domain. 8 disulfide bridges follow: C46/C107, C54/C100, C91/C129, C118/C159, C122/C146, C182/C201, C205/C283, and C303/C378. N60 is a glycosylation site (N-linked (GlcNAc...) asparagine). N-linked (GlcNAc...) asparagine glycosylation is present at N145. A helical membrane pass occupies residues 214-244 (RSAKEFTDIWMAVWASLCFISTTFTVLTFLI). The Cytoplasmic segment spans residues 245 to 250 (DSSRFS). The helical transmembrane segment at 251-276 (YPERPIIFLSMCYNIYSIAYIVRLTV) threads the bilayer. The Extracellular segment spans residues 277–300 (GRERISCDFEEAAEPVLIQEGLKN). The chain crosses the membrane as a helical span at residues 301–334 (TGCAIIFLLMYFFGMASSIWWVILTLTWFLAAGL). Topologically, residues 335 to 337 (KWG) are cytoplasmic. Residues 338-366 (HEAIEMHSSYFHIAAWAIPAVKTIVILIM) traverse the membrane as a helical segment. Topologically, residues 367 to 384 (RLVDADELTGLCYVGNQS) are extracellular. A glycan (N-linked (GlcNAc...) asparagine) is linked at N382. Residues 385–419 (LDALTGFVVAPLFTYLVIGTLFIAAGLVALFKIRS) form a helical membrane-spanning segment. The Cytoplasmic portion of the chain corresponds to 420–432 (NLQKDGTKTDKLE). Residues 433 to 461 (RLMVKIGVFSVLYTVPATCVIACYFYEIS) form a helical membrane-spanning segment. Residues 462–474 (NWALFRYSADDSN) are Extracellular-facing. A helical membrane pass occupies residues 475–496 (MAVEMLKIFMSLLVGITSGMWI). The Cytoplasmic portion of the chain corresponds to 497 to 538 (WSAKTLHTWQKCSNRLVNSGKVKREKRGNGWVKPGKGNETVV). Residues 500 to 505 (KTLHTW) carry the Lys-Thr-X-X-X-Trp motif, mediates interaction with the PDZ domain of Dvl family members motif. The PDZ-binding motif lies at 536–538 (TVV).

The protein belongs to the G-protein coupled receptor Fz/Smo family. As to quaternary structure, interacts with MAGI3 and NDP. Component of a complex, at least composed of TSPAN12, FZD4 and norrin (NDP). Interacts (via FZ domain) with TSKU; TSKU competes with WNT2B for binding to FZD4, inhibiting Wnt signaling and repressing peripheral eye development. Interacts with glypican GPC3. Ubiquitinated by ZNRF3, leading to its degradation by the proteasome.

The protein localises to the cell membrane. In terms of biological role, receptor for Wnt proteins. Most of frizzled receptors are coupled to the beta-catenin (CTNNB1) canonical signaling pathway, which leads to the activation of disheveled proteins, inhibition of GSK-3 kinase, nuclear accumulation of beta-catenin (CTNNB1) and activation of Wnt target genes. Plays a critical role in retinal vascularization by acting as a receptor for Wnt proteins and norrin (NDP). In retina, it can be both activated by Wnt protein-binding, but also by a Wnt-independent signaling via binding of norrin (NDP), promoting in both cases beta-catenin (CTNNB1) accumulation and stimulation of LEF/TCF-mediated transcriptional programs. A second signaling pathway involving PKC and calcium fluxes has been seen for some family members, but it is not yet clear if it represents a distinct pathway or if it can be integrated in the canonical pathway, as PKC seems to be required for Wnt-mediated inactivation of GSK-3 kinase. Both pathways seem to involve interactions with G-proteins. May be involved in transduction and intercellular transmission of polarity information during tissue morphogenesis and/or in differentiated tissues. The sequence is that of Frizzled-4 (Fzd4) from Rattus norvegicus (Rat).